The following is a 421-amino-acid chain: F-box protein At2g17690 (421 aa).

In terms of domain architecture, F-box spans 2-50; the sequence is GDWSKLPEELLGLIALRLYSVIELIRFRSICKSWRSSASGVNKNHSLSS.

In terms of biological role, involved in heat stress response. Contributes to recovery from heat stress. The polypeptide is F-box protein At2g17690 (Arabidopsis thaliana (Mouse-ear cress)).